The following is a 196-amino-acid chain: Putative tyrosine-protein phosphatase OCA1 (196 aa).

In terms of domain architecture, Tyrosine-protein phosphatase spans 33–192 (NFCPVEKQLY…SVQIDPTKMP (160 aa)). The active-site Phosphocysteine intermediate is Cys-130.

The protein belongs to the protein-tyrosine phosphatase family.

The protein resides in the cytoplasm. It carries out the reaction O-phospho-L-tyrosyl-[protein] + H2O = L-tyrosyl-[protein] + phosphate. In terms of biological role, putative tyrosine-protein phosphatase required for protection against superoxide stress. This is Putative tyrosine-protein phosphatase OCA1 (OCA1) from Debaryomyces hansenii (strain ATCC 36239 / CBS 767 / BCRC 21394 / JCM 1990 / NBRC 0083 / IGC 2968) (Yeast).